A 144-amino-acid chain; its full sequence is Ribonuclease H (144 aa).

Residues 1–141 enclose the RNase H type-1 domain; that stretch reads MDKIDIYSDG…ADALANRGVE (141 aa). Aspartate 9, glutamate 47, aspartate 69, and aspartate 133 together coordinate Mg(2+).

It belongs to the RNase H family. Monomer. Requires Mg(2+) as cofactor.

The protein localises to the cytoplasm. The catalysed reaction is Endonucleolytic cleavage to 5'-phosphomonoester.. Functionally, endonuclease that specifically degrades the RNA of RNA-DNA hybrids. The chain is Ribonuclease H from Janthinobacterium sp. (strain Marseille) (Minibacterium massiliensis).